Here is a 202-residue protein sequence, read N- to C-terminus: Orotate phosphoribosyltransferase (202 aa).

5-phospho-alpha-D-ribose 1-diphosphate contacts are provided by residues R94, K98, H100, and 120–128 (EDLISTGGS). S124 contacts orotate.

Belongs to the purine/pyrimidine phosphoribosyltransferase family. PyrE subfamily. In terms of assembly, homodimer. Mg(2+) is required as a cofactor.

It carries out the reaction orotidine 5'-phosphate + diphosphate = orotate + 5-phospho-alpha-D-ribose 1-diphosphate. It participates in pyrimidine metabolism; UMP biosynthesis via de novo pathway; UMP from orotate: step 1/2. Catalyzes the transfer of a ribosyl phosphate group from 5-phosphoribose 1-diphosphate to orotate, leading to the formation of orotidine monophosphate (OMP). The protein is Orotate phosphoribosyltransferase of Oceanobacillus iheyensis (strain DSM 14371 / CIP 107618 / JCM 11309 / KCTC 3954 / HTE831).